The sequence spans 710 residues: Protein Smaug homolog 1 (710 aa).

Disordered regions lie at residues 276–319 and 441–476; these read ARGS…FQDE and NQAT…ESDL. The span at 309–318 shows a compositional bias: polar residues; it reads QSTACNTFQD. The SAM domain occupies 319–379; the sequence is EGSGMKDVPA…KIVISIQKLK (61 aa).

The protein belongs to the SMAUG family.

It localises to the cytoplasm. The protein resides in the cell projection. Its subcellular location is the dendrite. The protein localises to the synapse. It is found in the synaptosome. In terms of biological role, acts as a translational repressor. The sequence is that of Protein Smaug homolog 1 (samd4a) from Xenopus laevis (African clawed frog).